A 243-amino-acid polypeptide reads, in one-letter code: CR(VI) reductase (243 aa).

This sequence belongs to the flavin oxidoreductase frp family. Requires FMN as cofactor.

This is CR(VI) reductase (chrR) from Pseudomonas sp. (strain G-1).